Consider the following 525-residue polypeptide: MKLTLWTYEGPPHVGAMRVATAMKDLQLVLHGPQGDTYADLLFTMIERRNARPPVSFSTFEASHMGTDTAILLKDALAAAHARYKPQAMAVALTCTAELLQDDPNGISRALNLPVPVVPLELPSYSRKENYGADETFRALVRALAVPMERTPEVTCNLLGATALGFRHRDDVAEVTKLLATMGIKVNVCAPLGASPDDLRKLGQAHFNVLMYPETGESAARHLERACKQPFTKIVPIGVGATRDFLAEVSKITGLPVVTDESTLRQPWWSASVDSTYLTGKRVFIFGDGTHVIAAARIAAKEVGFEVVGMGCYNREMARPLRTAAAEYGLEALITDDYLEVEKAIEAAAPELILGTQMERNIAKKLGLPCAVISAPVHVQDFPARYAPQMGFEGANVLFDTWVHPLVMGLEEHLLTMFREDFEFHDAAGASHHGGKAVAREESPVAPADLAPAATSDTPAAPSPVVVTQASGEIRWMPEAERELRKIPFFVRGKAKRNTELYAAHKGVCDITVETLYEAKAHYAR.

Residue D36 participates in [4Fe-4S] cluster binding. D274 serves as the catalytic Proton donor. Residue 409-410 (GL) coordinates substrate. The interval 433 to 464 (HGGKAVAREESPVAPADLAPAATSDTPAAPSP) is disordered. Positions 444–464 (PVAPADLAPAATSDTPAAPSP) are enriched in low complexity.

It belongs to the ChlB/BchB/BchZ family. As to quaternary structure, protochlorophyllide reductase is composed of three subunits; BchL, BchN and BchB. Forms a heterotetramer of two BchB and two BchN subunits. [4Fe-4S] cluster serves as cofactor.

It carries out the reaction chlorophyllide a + oxidized 2[4Fe-4S]-[ferredoxin] + 2 ADP + 2 phosphate = protochlorophyllide a + reduced 2[4Fe-4S]-[ferredoxin] + 2 ATP + 2 H2O. The protein operates within porphyrin-containing compound metabolism; bacteriochlorophyll biosynthesis (light-independent). Functionally, component of the dark-operative protochlorophyllide reductase (DPOR) that uses Mg-ATP and reduced ferredoxin to reduce ring D of protochlorophyllide (Pchlide) to form chlorophyllide a (Chlide). This reaction is light-independent. The NB-protein (BchN-BchB) is the catalytic component of the complex. The polypeptide is Light-independent protochlorophyllide reductase subunit B (Rhodobacter capsulatus (strain ATCC BAA-309 / NBRC 16581 / SB1003)).